A 142-amino-acid chain; its full sequence is ATP synthase epsilon chain (142 aa).

Belongs to the ATPase epsilon chain family. F-type ATPases have 2 components, CF(1) - the catalytic core - and CF(0) - the membrane proton channel. CF(1) has five subunits: alpha(3), beta(3), gamma(1), delta(1), epsilon(1). CF(0) has three main subunits: a, b and c.

Its subcellular location is the cell inner membrane. In terms of biological role, produces ATP from ADP in the presence of a proton gradient across the membrane. This chain is ATP synthase epsilon chain, found in Shewanella sp. (strain ANA-3).